Consider the following 347-residue polypeptide: uncharacterized protein (347 aa).

This is an uncharacterized protein from Magallana gigas (Pacific oyster).